The following is a 490-amino-acid chain: 5'-3' exonuclease PLD3 (490 aa).

At Met-1–Trp-38 the chain is on the cytoplasmic side. A helical; Signal-anchor for type II membrane protein membrane pass occupies residues Val-39 to Leu-59. At Trp-60–Leu-490 the chain is on the lumenal side. 2 disulfide bridges follow: Cys-77-Cys-239 and Cys-81-Cys-237. 2 N-linked (GlcNAc...) asparagine glycosylation sites follow: Asn-97 and Asn-132. One can recognise a PLD phosphodiesterase 1 domain in the interval Thr-196–Ser-223. Residues His-201, Lys-203, and Asp-208 contribute to the active site. His-201 serves as the catalytic Proton donor. The phosphate site is built by His-201 and Lys-203. A phosphate-binding site is contributed by Asn-218. N-linked (GlcNAc...) asparagine glycans are attached at residues Asn-236, Asn-284, and Asn-387. Cys-366 and Cys-487 are oxidised to a cystine. The 27-residue stretch at Tyr-411 to Tyr-437 folds into the PLD phosphodiesterase 2 domain. His-416 provides a ligand contact to phosphate. His-416 serves as the catalytic Nucleophile. Phe-438 lines the Mg(2+) pocket.

The protein belongs to the phospholipase D family. Homodimer. Interacts with APP. Post-translationally, N-glycosylated. In terms of processing, proteolytically processed to a soluble active form that is stable within endosomes and lysosomes. During transport through the secretory pathway becomes proteolysed by cysteine proteases, thereby releasing a stable soluble lysosomal lumenal polypeptide, whereas the transmembrane-bound fragment is rapidly degraded. Its transport route to lysosomes involves ubiquitination and the ESCRT complex. Ubiquitinated at N-terminus. Ubiquitination mediates sorting into lysosomes. Widely expressed. In the brain, high levels of expression are detected in the frontal, temporal and occipital cortices and hippocampus. Expressed at low level in corpus callosum. Expressed in plasmacytoid dendritic cells and monocytes (at protein level).

Its subcellular location is the endoplasmic reticulum membrane. It localises to the lysosome lumen. The protein localises to the early endosome membrane. The protein resides in the late endosome membrane. It is found in the golgi apparatus membrane. Its subcellular location is the endosome membrane. It carries out the reaction Exonucleolytic cleavage in the 5'- to 3'-direction to yield nucleoside 3'-phosphates.. The enzyme catalyses a 5'-end 5'-dephospho-ribonucleotidyl-ribonucleotide-RNA + H2O = a ribonucleoside 3'-phosphate + a 5'-end dephospho-ribonucleoside-RNA + H(+). It catalyses the reaction a ribonucleoside 3'-phosphate-2'-3'-cyclophospho-GMP + H2O = a ribonucleoside 3'-phosphate + 2',3'-cyclophospho-GMP + H(+). The catalysed reaction is a 5'-end 5'-dephospho-2'-deoxyribonucleotidyl-2'-deoxyribonucleotide in single-stranded DNA + H2O = a 5'-end dephospho-2'-deoxyribonucleoside in single-stranded DNA + a 2'-deoxyribonucleoside 3'-phosphate + H(+). It carries out the reaction a 5'-end 5'-phospho-2'-deoxyribonucleotide in single-stranded DNA + H2O = a 5'-end 5'-dephospho-2'-deoxyribonucleotide in single-stranded DNA + phosphate. The enzyme catalyses a 3-lyso-sn-glycero-1-phospho-(3'-acyl-1'-sn-glycerol) + a 1-acyl-sn-glycerol = a 3-acyl-sn-glycero-1-phospho-(3'-acyl-1'-sn-glycerol) + glycerol. It catalyses the reaction 3-lyso-sn-glycero-1-phospho-(3'-(9Z-octadecenoyl)-1'-sn-glycerol) + 1-(9Z-octadecenoyl)-sn-glycerol = 3-(9Z-octadecenoyl)-sn-glycero-1-phospho-(3'-(9Z-octadecenoyl)-1'-sn-glycerol) + glycerol. With respect to regulation, the exonuclease activity toward ssDNA substrate is Ca(2+) and Mg(2+)-independent, but it is inhibited by Fe(2+), Cu(2+) and to a lesser extent Zn(2+) ions. Functionally, 5'-&gt;3' exonuclease that hydrolyzes the phosphodiester bond of single-stranded DNA (ssDNA) and RNA molecules to form nucleoside 3'-monophosphates and 5'-end 5'-hydroxy deoxyribonucleotide/ribonucleotide fragments. Partially redundant with PLD4, can cleave all four nucleotides displaying higher efficiency for ssDNA and RNA fragments initiated with uridine and guanosine residues and lower efficiency for cytidine-initiated substrates. As a result, it does not always degrade polynucleotides to the single nucleotide level, it can stall at specific sites sparing certain fragments from exonucleolytic degradation. Processes self and pathogenic ssDNA and RNA molecules that reach the endolysosomal compartment via phagocytosis or autophagy and may serve as 'danger' signals for recognition by innate immune receptors such as toll-like receptors (TLRs). Degrades mitochondrial CpG-rich ssDNA fragments to prevent TLR9 activation and autoinflammatory response, but it can cleave viral RNA to generate ligands for TLR7 activation and initiate antiviral immune responses. In plasmacytoid dendritic cells, it cooperates with endonuclease RNASET2 to release 2',3'-cyclic guanosine monophosphate (2',3'-cGMP), a potent stimulatory ligand for TLR7. Produces 2',3'-cGMPs and cytidine-rich RNA fragments that occupy TLR7 ligand-binding pockets and trigger a signaling-competent state. Can exert polynucleotide phosphatase activity toward 5'-phosphorylated ssDNA substrates although at a slow rate. Transphosphatidylase that catalyzes the exchange with R to S stereo-inversion of the glycerol moiety between (S,R)-lysophosphatidylglycerol (LPG) and monoacylglycerol (MAG) substrates to yield (S,S)-bis(monoacylglycero)phosphate (BMP). Can synthesize a variety of (S,S)-BMPs representing the main phospholipid constituent of lysosomal intralumenal vesicle (ILV) membranes that bind acid hydrolases for lipid degradation. Regulates the homeostasis and interorganellar communication of the endolysosomal system with an overall impact on cellular removal of dysfunctional organelles via autophagy as well as proper protein and lipid turnover. May play a role in myotube formation in response to ER stress. This chain is 5'-3' exonuclease PLD3, found in Homo sapiens (Human).